The primary structure comprises 699 residues: Lutropin-choriogonadotropic hormone receptor (699 aa).

Positions 1–26 are cleaved as a signal peptide; that stretch reads MKQRFSALQLLKLLLLLQPPLPRALR. The LRRNT domain occupies 27–66; the sequence is EALCPEPCNCVPDGALRCPGPTAGLTRLSLAYLPVKVIPS. Residues 27–363 lie on the Extracellular side of the membrane; sequence EALCPEPCNC…EDIMGYDFLR (337 aa). LRR repeat units follow at residues 96-115, 124-145, and 149-171; these read NLLN…RYIE, RLKY…TKVF, and SNFI…AFQG. Residue asparagine 99 is glycosylated (N-linked (GlcNAc...) asparagine). Asparagine 174 and asparagine 195 each carry an N-linked (GlcNAc...) asparagine glycan. LRR repeat units lie at residues 175-196, 198-220, and 223-244; these read ESVT…AFNG, TLTS…AFRG, and GPKT…GLES. N-linked (GlcNAc...) asparagine glycosylation is found at asparagine 291, asparagine 299, and asparagine 313. Tyrosine 331 bears the Sulfotyrosine mark. A helical transmembrane segment spans residues 364-385; the sequence is VLIWLINILAIMGNMTVLFVLL. Over 386-395 the chain is Cytoplasmic; sequence TSRYKLTVPR. Residues 396 to 416 traverse the membrane as a helical segment; sequence FLMCNLSFADFCMGLYLLLIA. Residues 417–439 lie on the Extracellular side of the membrane; that stretch reads SVDSQTKGQYYNHAIDWQTGSGC. An intrachain disulfide couples cysteine 439 to cysteine 514. The helical transmembrane segment at 440–462 threads the bilayer; that stretch reads STAGFFTVFASELSVYTLTVITL. The Cytoplasmic segment spans residues 463–482; that stretch reads ERWHTITYAIHLDQKLRLRH. The chain crosses the membrane as a helical span at residues 483-505; that stretch reads AILIMLGGWLFSSLIAMLPLVGV. Residues 506–525 lie on the Extracellular side of the membrane; that stretch reads SNYMKVSICFPMDVETTLSQ. The chain crosses the membrane as a helical span at residues 526 to 549; the sequence is VYILTILILNVVAFFIICACYIKI. Over 550–570 the chain is Cytoplasmic; that stretch reads YFAVRNPELMATNKDTKIAKK. A helical transmembrane segment spans residues 571–594; that stretch reads MAILIFTDFTCMAPISFFAISAAF. Over 595 to 605 the chain is Extracellular; sequence KVPLITVTNSK. Residues 606–627 form a helical membrane-spanning segment; the sequence is VLLVLFYPINSCANPFLYAIFT. Residues 628–699 are Cytoplasmic-facing; sequence KTFQRDFFLL…LLDKTRYTEC (72 aa). 2 S-palmitoyl cysteine lipidation sites follow: cysteine 643 and cysteine 644.

Belongs to the G-protein coupled receptor 1 family. FSH/LSH/TSH subfamily. Sulfated. Gonadal and thyroid cells.

The protein localises to the cell membrane. In terms of biological role, receptor for lutropin-choriogonadotropic hormone. The activity of this receptor is mediated by G proteins which activate adenylate cyclase. This is Lutropin-choriogonadotropic hormone receptor (LHCGR) from Homo sapiens (Human).